The primary structure comprises 417 residues: NADH-quinone oxidoreductase subunit D (417 aa).

It belongs to the complex I 49 kDa subunit family. In terms of assembly, NDH-1 is composed of 14 different subunits. Subunits NuoB, C, D, E, F, and G constitute the peripheral sector of the complex.

Its subcellular location is the cell inner membrane. It catalyses the reaction a quinone + NADH + 5 H(+)(in) = a quinol + NAD(+) + 4 H(+)(out). Functionally, NDH-1 shuttles electrons from NADH, via FMN and iron-sulfur (Fe-S) centers, to quinones in the respiratory chain. The immediate electron acceptor for the enzyme in this species is believed to be ubiquinone. Couples the redox reaction to proton translocation (for every two electrons transferred, four hydrogen ions are translocated across the cytoplasmic membrane), and thus conserves the redox energy in a proton gradient. The chain is NADH-quinone oxidoreductase subunit D from Janthinobacterium sp. (strain Marseille) (Minibacterium massiliensis).